The sequence spans 268 residues: Phosphate import ATP-binding protein PstB 2 (268 aa).

Residues 19-263 form the ABC transporter domain; sequence YKVRNMAFFY…PKDKRTEDYI (245 aa). 51-58 lines the ATP pocket; it reads GPSGCGKS.

This sequence belongs to the ABC transporter superfamily. Phosphate importer (TC 3.A.1.7) family. In terms of assembly, the complex is composed of two ATP-binding proteins (PstB), two transmembrane proteins (PstC and PstA) and a solute-binding protein (PstS).

Its subcellular location is the cell inner membrane. It carries out the reaction phosphate(out) + ATP + H2O = ADP + 2 phosphate(in) + H(+). Functionally, part of the ABC transporter complex PstSACB involved in phosphate import. Responsible for energy coupling to the transport system. The polypeptide is Phosphate import ATP-binding protein PstB 2 (Gloeobacter violaceus (strain ATCC 29082 / PCC 7421)).